The primary structure comprises 831 residues: Leucine--tRNA ligase (831 aa).

A 'HIGH' region motif is present at residues 35 to 45 (PYPSGKIHVGH). The 'KMSKS' region signature appears at 600–604 (KMSKS). Residue Lys603 participates in ATP binding.

Belongs to the class-I aminoacyl-tRNA synthetase family.

It localises to the cytoplasm. It catalyses the reaction tRNA(Leu) + L-leucine + ATP = L-leucyl-tRNA(Leu) + AMP + diphosphate. The protein is Leucine--tRNA ligase of Rickettsia bellii (strain RML369-C).